Consider the following 206-residue polypeptide: Peptidyl-tRNA hydrolase (206 aa).

Tyr-14 is a binding site for tRNA. The active-site Proton acceptor is the His-19. Positions 64, 66, and 112 each coordinate tRNA.

Belongs to the PTH family. Monomer.

It localises to the cytoplasm. The catalysed reaction is an N-acyl-L-alpha-aminoacyl-tRNA + H2O = an N-acyl-L-amino acid + a tRNA + H(+). Its function is as follows. Hydrolyzes ribosome-free peptidyl-tRNAs (with 1 or more amino acids incorporated), which drop off the ribosome during protein synthesis, or as a result of ribosome stalling. In terms of biological role, catalyzes the release of premature peptidyl moieties from peptidyl-tRNA molecules trapped in stalled 50S ribosomal subunits, and thus maintains levels of free tRNAs and 50S ribosomes. The sequence is that of Peptidyl-tRNA hydrolase from Rhodopseudomonas palustris (strain ATCC BAA-98 / CGA009).